Here is a 474-residue protein sequence, read N- to C-terminus: Cobyric acid synthase (474 aa).

Residues 251-431 form the GATase cobBQ-type domain; the sequence is TGFVAIPRLP…LHGLLENSAY (181 aa). C328 (nucleophile) is an active-site residue. H423 is an active-site residue.

It belongs to the CobB/CobQ family. CobQ subfamily.

Its pathway is cofactor biosynthesis; adenosylcobalamin biosynthesis. Its function is as follows. Catalyzes amidations at positions B, D, E, and G on adenosylcobyrinic A,C-diamide. NH(2) groups are provided by glutamine, and one molecule of ATP is hydrogenolyzed for each amidation. This is Cobyric acid synthase from Deinococcus radiodurans (strain ATCC 13939 / DSM 20539 / JCM 16871 / CCUG 27074 / LMG 4051 / NBRC 15346 / NCIMB 9279 / VKM B-1422 / R1).